The following is a 1052-amino-acid chain: Eukaryotic translation initiation factor 3 subunit A (1052 aa).

Residues 325–505 (IQYAASAVLL…GSLHFNNNIF (181 aa)) form the PCI domain. Coiled-coil stretches lie at residues 568-712 (REHV…RLRE) and 769-882 (EKTA…SAQT). 2 stretches are compositionally biased toward basic and acidic residues: residues 570-600 (HVSN…EQMQ) and 793-874 (KIRL…EQEK). Disordered regions lie at residues 570–606 (HVSN…HQNQ) and 793–1052 (KIRL…DDKN). Composition is skewed to polar residues over residues 875 to 887 (LSNL…QPTW) and 895 to 906 (APTTAAPSSMRV). 4 stretches are compositionally biased toward basic and acidic residues: residues 942-952 (DRGDRAPRDTG), 960-970 (DRGDRAPRDTG), 979-1013 (RAPR…ERRA), and 1037-1052 (GSER…DDKN).

Belongs to the eIF-3 subunit A family. Component of the eukaryotic translation initiation factor 3 (eIF-3) complex.

The protein localises to the cytoplasm. RNA-binding component of the eukaryotic translation initiation factor 3 (eIF-3) complex, which is involved in protein synthesis of a specialized repertoire of mRNAs and, together with other initiation factors, stimulates binding of mRNA and methionyl-tRNAi to the 40S ribosome. The eIF-3 complex specifically targets and initiates translation of a subset of mRNAs involved in cell proliferation. In Monosiga brevicollis (Choanoflagellate), this protein is Eukaryotic translation initiation factor 3 subunit A.